The chain runs to 142 residues: Large ribosomal subunit protein uL11 (142 aa).

The protein belongs to the universal ribosomal protein uL11 family. In terms of assembly, part of the ribosomal stalk of the 50S ribosomal subunit. Interacts with L10 and the large rRNA to form the base of the stalk. L10 forms an elongated spine to which L12 dimers bind in a sequential fashion forming a multimeric L10(L12)X complex. One or more lysine residues are methylated.

Its function is as follows. Forms part of the ribosomal stalk which helps the ribosome interact with GTP-bound translation factors. The chain is Large ribosomal subunit protein uL11 from Hahella chejuensis (strain KCTC 2396).